Consider the following 146-residue polypeptide: Protein MucA (146 aa).

Active-site for autocatalytic cleavage activity residues include S62 and K99.

The protein belongs to the peptidase S24 family.

In terms of biological role, involved in UV protection and mutation. The chain is Protein MucA (mucA) from Escherichia coli.